The following is a 622-amino-acid chain: Chaperone protein HscA homolog (622 aa).

Belongs to the heat shock protein 70 family.

Chaperone involved in the maturation of iron-sulfur cluster-containing proteins. Has a low intrinsic ATPase activity which is markedly stimulated by HscB. In Burkholderia pseudomallei (strain 668), this protein is Chaperone protein HscA homolog.